We begin with the raw amino-acid sequence, 533 residues long: MGSLNTEDVLEHSSAFGATNPLDPEEFRRQGHMIIDFLADYYRDVEKYPVRSQVEPGYLRKRLPETAPYNPESIETILQDVTSEIIPGLTHWQSPNYYAYFPSSGSVAGFLGEMLSTGFNVVGFNWMSSPAATELEGIVMDWFGKMLNLPKSYLFSGTGGGVLQGTTCEAILCTLTAARDRKLNKIGREHIGRLVVYGSDQTHCALQKAAQIAGINPKNFRAVKTFKANSFGLAASTLREVILEDIEAGLIPLFVCPTVGTTSSTAVDPIGPICEVAKEYEMWVHIDAAYAGSACICPEFRHFIDGVEEADSFSLNAHKWFFTTLDCCCLWVKDPSSLVKALSTNPEYLRNKATESRQVVDYKDWQIALIRRFRSMKLWMVLRSYGVTNLRNFLRSHVRMAKTFEGLVGADRRFEITVPRTFAMVCFRLLPPTTVKVCGENGVHQNGNGVIAVLRNENEELVLANKLNQVYLRQVKATGSVYMTHAVVGGVYMIRFAVGSTLTEERHVIHAWEVLQEHADLILSKFDEANFSS.

Lys-319 carries the N6-(pyridoxal phosphate)lysine modification.

The protein belongs to the group II decarboxylase family. Homodimer. Pyridoxal 5'-phosphate serves as cofactor. In terms of tissue distribution, roots.

The enzyme catalyses L-tyrosine + H(+) = tyramine + CO2. The catalysed reaction is L-dopa + H(+) = dopamine + CO2. It carries out the reaction 5-hydroxy-L-tryptophan + H(+) = serotonin + CO2. Its function is as follows. Marginally higher substrate specificity for L-DOPA over L-tyrosine. This Papaver somniferum (Opium poppy) protein is Tyrosine/DOPA decarboxylase 3 (TYDC3).